Reading from the N-terminus, the 596-residue chain is Estrogen receptor (596 aa).

The segment at 1-185 is modulating (transactivation AF-1); mediates interaction with MACROD1; sequence MTMTLHTKAS…AMESAKETRY (185 aa). Serine 10 carries O-linked (GlcNAc) serine glycosylation. Positions 36-48 are required for interaction with NCOA1; it reads ERPLGEVYMDSSK. The segment at 36–175 is interaction with DDX5; self-association; sequence ERPLGEVYMD…LASTSDKGSM (140 aa). Residues serine 104 and serine 106 each carry the phosphoserine; by CDK2 modification. Residue serine 119 is modified to Phosphoserine. Residues 144-175 are disordered; the sequence is EAGPPAYYRPNSDNRRQGGRERLASTSDKGSM. The span at 155 to 166 shows a compositional bias: basic and acidic residues; sequence SDNRRQGGRERL. The residue at position 168 (serine 168) is a Phosphoserine; by CK2. 2 NR C4-type zinc fingers span residues 186–206 and 222–246; these read CAVC…CEGC and CPAT…LRKC. A DNA-binding region (nuclear receptor) is located at residues 186–251; sequence CAVCNDYASG…RLRKCYEVGM (66 aa). The tract at residues 186–311 is mediates interaction with DNTTIP2; sequence CAVCNDYASG…TKKNSPVLSL (126 aa). The segment at 252–311 is hinge; the sequence is MKGGIRKDRRGGRMLKHKRQRDDGEGRNEAVPSGDMRAANLWPSPIMIKHTKKNSPVLSL. The span at 259-270 shows a compositional bias: basic residues; the sequence is DRRGGRMLKHKR. The segment at 259–285 is disordered; that stretch reads DRRGGRMLKHKRQRDDGEGRNEAVPSG. Asymmetric dimethylarginine; by PRMT1 is present on arginine 261. Residues 263–596 are interaction with AKAP13; that stretch reads GRMLKHKRQR…GEAENFPSTV (334 aa). Residues 265–595 are self-association; it reads MLKHKRQRDD…TGEAENFPST (331 aa). Residues 312–548 form the NR LBD domain; sequence TADQMISALL…DLLLEMLDAH (237 aa). Residues 312-595 are transactivation AF-2; it reads TADQMISALL…TGEAENFPST (284 aa). Residues glutamate 354 and arginine 395 each contribute to the 17beta-estradiol site. A lipid anchor (S-palmitoyl cysteine) is attached at cysteine 448. Histidine 525 is a 17beta-estradiol binding site. Position 538 is a phosphotyrosine; by Tyr-kinases (tyrosine 538). Threonine 572 is a glycosylation site (O-linked (GlcNAc) threonine).

It belongs to the nuclear hormone receptor family. NR3 subfamily. In terms of assembly, binds DNA as a homodimer. Can form a heterodimer with ESR2. Interacts with coactivator NCOA5. Interacts with PELP1, the interaction is enhanced by 17-beta-estradiol; the interaction increases ESR1 transcriptional activity. Interacts with NCOA7; the interaction is ligand-inducible. Interacts with AKAP13, CUEDC2, HEXIM1, KDM5A, MAP1S, SMARD1, and UBE1C. Interacts with MUC1; the interaction is stimulated by 7 beta-estradiol (E2) and enhances ESR1-mediated transcription. Interacts with DNTTIP2, and UIMC1. Interacts with KMT2D/MLL2. Interacts with ATAD2; the interaction is enhanced by estradiol. Interacts with KIF18A and LDB1. Interacts with RLIM (via its C-terminus). Interacts with MACROD1. Interacts with SH2D4A and PLCG. Interacts with SH2D4A; the interaction blocks binding to PLCG and inhibits estrogen-induced cell proliferation. Interacts with DYNLL1. Interacts with CCDC62; the interaction requires estradiol and appears to enhance the transcription of target genes. Interacts with NR2C1; the interaction prevents homodimerization of ESR1 and suppresses its transcriptional activity and cell growth. Interacts with DNAAF4. Interacts with PRMT2. Interacts with RBFOX2. Interacts with EP300; the interaction is estrogen-dependent and enhanced by CITED1. Interacts with CITED1; the interaction is estrogen-dependent. Interacts with FAM120B, FOXL2, PHB2 and SLC30A9. Interacts with coactivators NCOA3 and NCOA6. Interacts with STK3/MST2 only in the presence of SAV1 and vice-versa. Binds to CSNK1D. Interacts with NCOA2; NCOA2 can interact with ESR1 AF-1 and AF-2 domains simultaneously and mediate their transcriptional synergy. Interacts with DDX5. Interacts with NCOA1; the interaction seems to require a self-association of N-terminal and C-terminal regions. Interacts with ZNF366, DDX17, NFKB1, RELA, SP1 and SP3. Interacts with NRIP1. Interacts with GPER1; the interaction occurs in an estrogen-dependent manner. Interacts with CLOCK and the interaction is stimulated by estrogen. Interacts with TRIP4 (ufmylated); estrogen dependent. Interacts with LMTK3; the interaction phosphorylates ESR1 (in vitro) and protects it against proteasomal degradation. Interacts with CCAR2 (via N-terminus) in a ligand-independent manner. Interacts with ZFHX3. Interacts with SFR1 in a ligand-dependent and -independent manner. Interacts with DCAF13, LATS1 and DCAF1; regulates ESR1 ubiquitination and ubiquitin-mediated proteasomal degradation. Interacts (via DNA-binding domain) with POU4F2 (C-terminus); this interaction increases the estrogen receptor ESR1 transcriptional activity in a DNA- and ligand 17-beta-estradiol-independent manner. Interacts with ESRRB isoform 1. Interacts with UBE3A and WBP2. Interacts with GTF2B. Interacts with RBM39. In the absence of hormonal ligand, interacts with TACC1. Interacts with PI3KR1 or PI3KR2 and PTK2/FAK1. Interacts with SRC. Interacts with BAG1; the interaction is promoted in the absence of estradiol (17-beta-estradiol/E2). Interacts with and ubiquitinated by STUB1; the interaction is promoted in the absence of estradiol (17-beta-estradiol/E2). Interacts with NEDD8. In terms of processing, glycosylated; contains N-acetylglucosamine, probably O-linked. Ubiquitinated; regulated by LATS1 via DCAF1 it leads to ESR1 proteasomal degradation. Deubiquitinated by OTUB1. Ubiquitinated by STUB1/CHIP; in the CA1 hippocampal region following loss of endogenous circulating estradiol (17-beta-estradiol/E2). Ubiquitinated by UBR5, leading to its degradation: UBR5 specifically recognizes and binds ligand-bound ESR1 when it is not associated with coactivators (NCOAs). In presence of NCOAs, the UBR5-degron is not accessible, preventing its ubiquitination and degradation. Post-translationally, phosphorylated by cyclin A/CDK2 and CK1. Phosphorylation probably enhances transcriptional activity. Dephosphorylation at Ser-119 by PPP5C inhibits its transactivation activity. Phosphorylated by LMTK3 (in vitro). In terms of processing, palmitoylated at Cys-448 by ZDHHC7 and ZDHHC21. Palmitoylation is required for plasma membrane targeting and for rapid intracellular signaling via ERK and AKT kinases and cAMP generation, but not for signaling mediated by the nuclear hormone receptor. Dimethylated by PRMT1 at Arg-261. The methylation may favor cytoplasmic localization. Demethylated by JMJD6 at Arg-261.

It is found in the nucleus. It localises to the cytoplasm. The protein resides in the golgi apparatus. The protein localises to the cell membrane. Its function is as follows. Nuclear hormone receptor. The steroid hormones and their receptors are involved in the regulation of eukaryotic gene expression and affect cellular proliferation and differentiation in target tissues. Ligand-dependent nuclear transactivation involves either direct homodimer binding to a palindromic estrogen response element (ERE) sequence or association with other DNA-binding transcription factors, such as AP-1/c-Jun, c-Fos, ATF-2, Sp1 and Sp3, to mediate ERE-independent signaling. Ligand binding induces a conformational change allowing subsequent or combinatorial association with multiprotein coactivator complexes through LXXLL motifs of their respective components. Mutual transrepression occurs between the estrogen receptor (ER) and NF-kappa-B in a cell-type specific manner. Decreases NF-kappa-B DNA-binding activity and inhibits NF-kappa-B-mediated transcription from the IL6 promoter and displace RELA/p65 and associated coregulators from the promoter. Recruited to the NF-kappa-B response element of the CCL2 and IL8 promoters and can displace CREBBP. Present with NF-kappa-B components RELA/p65 and NFKB1/p50 on ERE sequences. Can also act synergistically with NF-kappa-B to activate transcription involving respective recruitment adjacent response elements; the function involves CREBBP. Can activate the transcriptional activity of TFF1. Also mediates membrane-initiated estrogen signaling involving various kinase cascades. Essential for MTA1-mediated transcriptional regulation of BRCA1 and BCAS3. Maintains neuronal survival in response to ischemic reperfusion injury when in the presence of circulating estradiol (17-beta-estradiol/E2). This chain is Estrogen receptor (ESR1), found in Bos taurus (Bovine).